A 187-amino-acid polypeptide reads, in one-letter code: dCTP deaminase (187 aa).

DCTP is bound by residues 107–112 (KSTYAR), 131–133 (TLE), Gln152, Tyr166, Lys175, and Gln176. Glu133 (proton donor/acceptor) is an active-site residue.

Belongs to the dCTP deaminase family. Homotrimer.

It carries out the reaction dCTP + H2O + H(+) = dUTP + NH4(+). It participates in pyrimidine metabolism; dUMP biosynthesis; dUMP from dCTP (dUTP route): step 1/2. In terms of biological role, catalyzes the deamination of dCTP to dUTP. In Ehrlichia canis (strain Jake), this protein is dCTP deaminase.